The sequence spans 355 residues: Beta-ketoacyl-[acyl-carrier-protein] synthase III 1 (355 aa).

Active-site residues include C122 and H280. An ACP-binding region spans residues 281-285; that stretch reads QANER. Residue N311 is part of the active site.

The protein belongs to the thiolase-like superfamily. FabH family. Homodimer.

Its subcellular location is the cytoplasm. The catalysed reaction is malonyl-[ACP] + acetyl-CoA + H(+) = 3-oxobutanoyl-[ACP] + CO2 + CoA. It functions in the pathway lipid metabolism; fatty acid biosynthesis. Functionally, catalyzes the condensation reaction of fatty acid synthesis by the addition to an acyl acceptor of two carbons from malonyl-ACP. Catalyzes the first condensation reaction which initiates fatty acid synthesis and may therefore play a role in governing the total rate of fatty acid production. Possesses both acetoacetyl-ACP synthase and acetyl transacylase activities. Its substrate specificity determines the biosynthesis of branched-chain and/or straight-chain of fatty acids. This Streptomyces avermitilis (strain ATCC 31267 / DSM 46492 / JCM 5070 / NBRC 14893 / NCIMB 12804 / NRRL 8165 / MA-4680) protein is Beta-ketoacyl-[acyl-carrier-protein] synthase III 1.